We begin with the raw amino-acid sequence, 416 residues long: Probable intermembrane transport protein HI_1671 (416 aa).

8 consecutive transmembrane segments (helical) span residues I62–I82, I107–L127, V138–L158, E172–I192, L263–L283, F306–M326, L347–L367, and I377–M397.

This sequence belongs to the PqiA family.

It localises to the cell inner membrane. The sequence is that of Probable intermembrane transport protein HI_1671 from Haemophilus influenzae (strain ATCC 51907 / DSM 11121 / KW20 / Rd).